The chain runs to 1087 residues: 2'-5'-oligoadenylate synthase 3 (1087 aa).

M1 is modified (N-acetylmethionine). The OAS domain 1 stretch occupies residues 6-343; that stretch reads TPAAALDRFV…GDPVQSWKGP (338 aa). Interaction with dsRNA stretches follow at residues 12–57 and 186–200; these read DRFV…VLKT and ELRR…AKLK. The tract at residues 344–410 is linker; that stretch reads GLPRAGCSGL…VPGMALDLSQ (67 aa). T365 carries the phosphothreonine modification. OAS domain regions lie at residues 411-742 and 750-1084; these read IPTK…PWDV and TPAG…WPVK. S804 serves as a coordination point for ATP. The Mg(2+) site is built by D816, D818, and D888. R947, K950, and Q969 together coordinate ATP.

The protein belongs to the 2-5A synthase family. Monomer. The cofactor is Mg(2+). As to expression, present at high level in placenta trophoblast.

The protein localises to the cytoplasm. Its subcellular location is the nucleus. It catalyses the reaction 3 ATP = 5'-triphosphoadenylyl-(2'-&gt;5')-adenylyl-(2'-&gt;5')-adenosine + 2 diphosphate. Produced as a latent enzyme which is activated by dsRNA generated during the course of viral infection. Strongly activated by long dsRNAs at least 50 nucleotides in length. ssRNA does not activate the enzyme. Its function is as follows. Interferon-induced, dsRNA-activated antiviral enzyme which plays a critical role in cellular innate antiviral response. In addition, it may also play a role in other cellular processes such as apoptosis, cell growth, differentiation and gene regulation. Synthesizes preferentially dimers of 2'-5'-oligoadenylates (2-5A) from ATP which then bind to the inactive monomeric form of ribonuclease L (RNase L) leading to its dimerization and subsequent activation. Activation of RNase L leads to degradation of cellular as well as viral RNA, resulting in the inhibition of protein synthesis, thus terminating viral replication. Can mediate the antiviral effect via the classical RNase L-dependent pathway or an alternative antiviral pathway independent of RNase L. Displays antiviral activity against Chikungunya virus (CHIKV), Dengue virus, Sindbis virus (SINV) and Semliki forest virus (SFV). The chain is 2'-5'-oligoadenylate synthase 3 (OAS3) from Homo sapiens (Human).